The sequence spans 64 residues: Putative calcium channel toxin Tx758 (64 aa).

Positions 1–18 (MSTFVIVFLLLTAVLCHA) are cleaved as a signal peptide. Residues 19-27 (EPALDETAR) constitute a propeptide that is removed on maturation. 3 cysteine pairs are disulfide-bonded: Cys-29–Cys-43, Cys-36–Cys-49, and Cys-42–Cys-58.

It belongs to the scorpion calcin-like family. Expressed by the venom gland.

Its subcellular location is the secreted. Functionally, may increase intracellular calcium release through the activation of nuclear inositol 1,4,5-trisphosphate receptors (ITPR) of cardiomyocytes, thereby causing an increase in the contraction frequency of these cells. In Buthus israelis (Israeli scorpion), this protein is Putative calcium channel toxin Tx758.